The primary structure comprises 283 residues: Phosphatidylglycerol--prolipoprotein diacylglyceryl transferase (283 aa).

4 helical membrane-spanning segments follow: residues Leu17–Gly37, Phe56–Tyr76, Trp92–Phe112, and Gly117–Ser137. Arg139 is an a 1,2-diacyl-sn-glycero-3-phospho-(1'-sn-glycerol) binding site. 3 helical membrane-spanning segments follow: residues Pro194 to Phe214, Gly222 to Ala242, and Gly255 to Val275.

Belongs to the Lgt family.

The protein localises to the cell inner membrane. The catalysed reaction is L-cysteinyl-[prolipoprotein] + a 1,2-diacyl-sn-glycero-3-phospho-(1'-sn-glycerol) = an S-1,2-diacyl-sn-glyceryl-L-cysteinyl-[prolipoprotein] + sn-glycerol 1-phosphate + H(+). It functions in the pathway protein modification; lipoprotein biosynthesis (diacylglyceryl transfer). Its function is as follows. Catalyzes the transfer of the diacylglyceryl group from phosphatidylglycerol to the sulfhydryl group of the N-terminal cysteine of a prolipoprotein, the first step in the formation of mature lipoproteins. The sequence is that of Phosphatidylglycerol--prolipoprotein diacylglyceryl transferase from Neisseria meningitidis serogroup C (strain 053442).